Here is a 189-residue protein sequence, read N- to C-terminus: Endoribonuclease YbeY (189 aa).

Zn(2+)-binding residues include H146, H150, and H156.

The protein belongs to the endoribonuclease YbeY family. Zn(2+) is required as a cofactor.

The protein resides in the cytoplasm. Single strand-specific metallo-endoribonuclease involved in late-stage 70S ribosome quality control and in maturation of the 3' terminus of the 16S rRNA. The protein is Endoribonuclease YbeY of Prochlorococcus marinus (strain MIT 9211).